Here is a 551-residue protein sequence, read N- to C-terminus: Mesoderm induction early response protein 3 (551 aa).

The span at 1-16 (MAEASFGSSSPVGSLS) shows a compositional bias: low complexity. Disordered regions lie at residues 1 to 62 (MAEA…EKEG) and 113 to 169 (LSGD…GNSP). Positions 17–36 (SEDHDFDPTAEMLVHDYDDE) are enriched in basic and acidic residues. Phosphoserine is present on residues serine 52, serine 53, and serine 114. Residues 121-134 (QSSADDLTPSVTSH) show a composition bias toward polar residues. Over residues 154–163 (KESEIEDVET) the composition is skewed to acidic residues. The residue at position 156 (serine 156) is a Phosphoserine. Residue threonine 163 is modified to Phosphothreonine. Phosphoserine is present on residues serine 165 and serine 168. In terms of domain architecture, ELM2 spans 174–273 (REIMIGLEYQ…EAIERYCCNG (100 aa)). The 53-residue stretch at 278–330 (EGMTAWTEEECRSFEHALMLHGKDFHLIQKDKVRSRTVAECVAFYYMWKKSER) folds into the SANT domain.

Its subcellular location is the nucleus. In terms of biological role, transcriptional repressor. The polypeptide is Mesoderm induction early response protein 3 (Mier3) (Mus musculus (Mouse)).